Here is a 674-residue protein sequence, read N- to C-terminus: Leucine-rich repeat transmembrane protein FLRT1 (674 aa).

Positions 1–51 are cleaved as a signal peptide; it reads MVVAHSAATATTTPAATVTATVVMTTATMDLRDWLFLCYGLIAFLTEVIDS. The Extracellular portion of the chain corresponds to 52–552; the sequence is TTCPSVCRCD…QNAGPMAGLP (501 aa). 2 cysteine pairs are disulfide-bonded: Cys-54–Cys-60 and Cys-58–Cys-67. The region spanning 54-80 is the LRRNT domain; that stretch reads CPSVCRCDNGFIYCNDRGLTSIPSDIP. 10 LRR repeats span residues 81 to 105, 106 to 126, 127 to 149, 151 to 175, 176 to 197, 198 to 220, 222 to 246, 247 to 269, 270 to 292, and 293 to 316; these read DDAT…LKTK, VKVQ…INLP, RSLR…SLAR, PLLE…AFAD, SKQL…SGLP, HTLE…AFKG, NSLR…TFSR, LQNL…NLPS, AHLQ…TLAK, and MREL…LFDD. N-linked (GlcNAc...) asparagine glycosylation is present at Asn-305. The LRRCT domain occupies 328-379; that stretch reads NPWFCGCNLMWLRDWVRARAAVVNVRGLMCQGPEKVRGMAIKDITSEMDECF. Cys-332 and Cys-357 are joined by a disulfide. The Fibronectin type-III domain occupies 437–532; it reads KTLVIQVKPL…VCAKAETADS (96 aa). A helical membrane pass occupies residues 553-573; that stretch reads LAGIIGGAVALVFLFLVLGAI. Residues 574-674 lie on the Cytoplasmic side of the membrane; the sequence is CWYVHRAGEL…GIPDVDYSYT (101 aa). Phosphotyrosine is present on residues Tyr-600, Tyr-633, and Tyr-671.

In terms of assembly, interacts with FGFR1. Interacts (via extracellular domain) with ADGRL1/LPHN1 and ADGRL3 (via olfactomedin-like domain). Post-translationally, phosphorylated in response to FGFR1 signaling, but is not a direct substrate of FGFR1 or SRC. A mutant where the Tyr phosphorylation sites have been replaced by Phe displays constitutive FGFR1-dependent activation of downstream MAP kinases. In terms of processing, N-glycosylated. Proteolytic cleavage in the juxtamembrane region gives rise to a soluble ectodomain. Detected in brain (at protein level).

The protein resides in the cell membrane. It localises to the endoplasmic reticulum membrane. The protein localises to the cytoplasmic vesicle membrane. Its subcellular location is the cytoplasm. It is found in the perinuclear region. The protein resides in the cell junction. It localises to the focal adhesion. The protein localises to the secreted. Its subcellular location is the cell projection. It is found in the neuron projection. Plays a role in fibroblast growth factor-mediated signaling cascades that lead to the activation of MAP kinases. Promotes neurite outgrowth via FGFR1-mediated activation of downstream MAP kinases. Promotes an increase both in neurite number and in neurite length. May play a role in cell-cell adhesion and cell guidance via its interaction with ADGRL1/LPHN1 and ADGRL3. This is Leucine-rich repeat transmembrane protein FLRT1 from Mus musculus (Mouse).